Here is an 808-residue protein sequence, read N- to C-terminus: Probable potassium transporter 3 (808 aa).

The Cytoplasmic segment spans residues 1-34 (MPVADCESGLSPADVTGAGAANGNPGHWRSYYRH). A helical membrane pass occupies residues 35–55 (VLLLAYQSCGVVYGDLSTSPL). Residues 56-81 (YVYKSTFIIGSLRRFQDEEIVFGVFS) are Extracellular-facing. The helical transmembrane segment at 82–102 (LVFWTLTLIPLLKYVFIVLAA) threads the bilayer. The Cytoplasmic segment spans residues 103 to 167 (DDNGEGGTFA…FLENHRKSRT (65 aa)). The helical transmembrane segment at 168–188 (FLLVTVLFGASLVIGDGVLTP) threads the bilayer. Topologically, residues 189 to 204 (PMSVLSSFSGLQVHST) are extracellular. Residues 205-225 (ALTSGEVEILSCTVLVCLFMV) form a helical membrane-spanning segment. Over 226–232 (QHWGTHR) the chain is Cytoplasmic. Residues 233 to 253 (VAFLFAPVVIVWLLLLGALGV) form a helical membrane-spanning segment. Residues 254–283 (YNIVVWNPRVLRALSPYYLVRFFQHTGKDG) are Extracellular-facing. The helical transmembrane segment at 284-304 (WISLGGILLSMTGTEAMYADL) threads the bilayer. Residues 305-313 (GHFTAASIR) are Cytoplasmic-facing. A helical transmembrane segment spans residues 314–334 (VAFVGLIYPCLVLQYMGQAAF). Residues 335 to 354 (LSKSPHCDIHFVFFESIPTG) are Extracellular-facing. Residues 355 to 375 (IFWPVLVIATLAAIVGSQAVI) form a helical membrane-spanning segment. Topologically, residues 376–406 (SATFSIVRQCTALGCFPRVKIVHTSRRIHGQ) are cytoplasmic. Residues 407-427 (IYSPEINWILMLLCIAVTMGL) form a helical membrane-spanning segment. Over 428–439 (RDTTLIGNAYGM) the chain is Extracellular. A helical transmembrane segment spans residues 440–460 (ACAGVMLVTTLLMALVIVFVW). Topologically, residues 461 to 464 (QYSC) are cytoplasmic. A helical membrane pass occupies residues 465–485 (LVAALFLVAFGVVEAVYLSAA). The Extracellular segment spans residues 486 to 491 (LMKVPQ). Residues 492–512 (GGWLPLVLSLVFVAVMYVWHY) traverse the membrane as a helical segment. Residues 513–808 (GTRRKHQFDV…LIEVGMIYYV (296 aa)) lie on the Cytoplasmic side of the membrane.

Belongs to the HAK/KUP transporter (TC 2.A.72.3) family.

It is found in the membrane. In terms of biological role, high-affinity potassium transporter. This is Probable potassium transporter 3 (HAK3) from Oryza sativa subsp. japonica (Rice).